A 168-amino-acid polypeptide reads, in one-letter code: Quinol oxidase subunit 2 (168 aa).

Residues 9-31 (EVWFIVMLVLVLIFFSWNVYYLS) traverse the membrane as a helical segment.

It belongs to the cytochrome c oxidase subunit 2 family.

It localises to the cell membrane. It carries out the reaction 2 a quinol + O2 = 2 a quinone + 2 H2O. Functionally, the terminal oxidase is the component of the respiratory chain that catalyzes the reduction of oxygen to water. Subunits 1-3 form the functional core of the enzyme complex. Its function is as follows. Subunit 2 transfers the electrons from caldariella quinol to the bimetallic center of the catalytic subunit 1 that is formed by heme A3 and Cu(B). This chain is Quinol oxidase subunit 2 (soxA), found in Sulfolobus acidocaldarius (strain ATCC 33909 / DSM 639 / JCM 8929 / NBRC 15157 / NCIMB 11770).